The sequence spans 160 residues: C-type lectin mosGCTL-1 (160 aa).

An N-terminal signal peptide occupies residues 1–20 (MLTKGITLILLLVLVHSSHG). The 118-residue stretch at 23–140 (TPNRKFYIPS…YHWSWNDNTC (118 aa)) folds into the C-type lectin domain. Cystine bridges form between C44-C140 and C120-C140. An N-linked (GlcNAc...) asparagine glycan is attached at N76.

As to quaternary structure, interacts with putative receptor-type tyrosine-protein phosphatase mosPTP-1; the interaction probably mediates the recruitment of West Nile virus particles in complex with C-type lectin mosGCTL-1 to the cell surface. In terms of assembly, (Microbial infection) Interacts with envelope protein E and virions of West Nile virus in a calcium-dependent manner. Female salivary gland (at protein level).

Its subcellular location is the secreted. In terms of biological role, putative lectin. Its function is as follows. (Microbial infection) Facilitates West Nile virus infection in mosquitoes probably via capturing viral particles and presenting them to a ligand on the cell surface, thereby facilitating viral entry. This chain is C-type lectin mosGCTL-1, found in Aedes aegypti (Yellowfever mosquito).